Here is an 80-residue protein sequence, read N- to C-terminus: U19-lycotoxin-Ls1a (80 aa).

Positions 1–22 (MSPKVQALIFIVGLITLLAAHA) are cleaved as a signal peptide. Residues 23-34 (QEELSDNIESER) constitute a propeptide that is removed on maturation. 4 disulfide bridges follow: cysteine 36/cysteine 50, cysteine 43/cysteine 55, cysteine 49/cysteine 66, and cysteine 57/cysteine 64.

Belongs to the neurotoxin 02 (plectoxin) family. 05 (U19-lycotoxin) subfamily. In terms of tissue distribution, expressed by the venom gland.

The protein resides in the secreted. The chain is U19-lycotoxin-Ls1a from Lycosa singoriensis (Wolf spider).